The sequence spans 488 residues: MHIQFPSKPTLPRACWEGRITAGSPGMPPDEIEIEPVRQSSDKMLYCEAESPPTVEKVKPARENSETDLEIEDDEKFFTTGQKELYLEACKLMGVVPVSYFIRNMEESYVNLNHHGLGPRGTKAIAIALVSNMAVTKLELEDNCIMEEGVLSLVEMLQENYYLQEMNISNNHLGLEGARIISDFFERNSSSIWSLELSGNDFKEDSAALLCQALSTNYQIKKLDLSHNQFSDVGGEHLGQMLAINVGLTSLDLSWNNFHTRGAVALCNGLRGNVTLTKLDLSMNGFGNEVALALGEVLRLNRCLVYLDIGGNDIGNEGASKISKGLESNESLRVLKLFLNPINMDGAILLILAIKRNPKSRMEELDISNVLVSEQFMKTLDGVYAVHPQLDVVFKAVQGLSPKKTIFLLTNPMKLIQSYADQHKITIVDFFKSLNPTGTMKMSVDEFQKVMIEQNKVPLNQYQVREVIKKLDEKTGMVNFSFLNTMKP.

8 LRR repeats span residues 134 to 155 (AVTK…SLVE), 162 to 182 (YLQE…RIIS), 191 to 212 (SIWS…LLCQ), 219 to 239 (QIKK…EHLG), 247 to 268 (GLTS…ALCN), 275 to 296 (TLTK…ALGE), 303 to 324 (CLVY…KISK), and 331 to 351 (SLRV…ILLI).

This Homo sapiens (Human) protein is Leucine-rich repeat-containing protein 74A.